Consider the following 275-residue polypeptide: Release factor glutamine methyltransferase (275 aa).

S-adenosyl-L-methionine-binding positions include 117–121 (GTGSG), Asp-140, Trp-168, and Asn-182. 182–185 (NPPY) contacts substrate.

This sequence belongs to the protein N5-glutamine methyltransferase family. PrmC subfamily.

It catalyses the reaction L-glutaminyl-[peptide chain release factor] + S-adenosyl-L-methionine = N(5)-methyl-L-glutaminyl-[peptide chain release factor] + S-adenosyl-L-homocysteine + H(+). Its function is as follows. Methylates the class 1 translation termination release factors RF1/PrfA and RF2/PrfB on the glutamine residue of the universally conserved GGQ motif. This Buchnera aphidicola subsp. Schizaphis graminum (strain Sg) protein is Release factor glutamine methyltransferase.